We begin with the raw amino-acid sequence, 199 residues long: MAYALPNLPYDYTALEPCISKSTLEFHHDKHHAAYVNNFNNAVAGTDLDNQSIEDVIKAVAGDASKAGIFNNAAQAWNHSFYWNCMKPGGGGQPSGALADKINADFGSFDAFVEAFKQAGATQFGSGWAWLVLDNGTLKVTKTGNAENPMTAGQTPLLTMDVWEHAYYLDYQNRRPDYIADFLGKLVNWDFVAANLAAA.

Fe cation is bound by residues H27, H79, D161, and H165.

It belongs to the iron/manganese superoxide dismutase family. In terms of assembly, homodimer. Fe cation is required as a cofactor.

It carries out the reaction 2 superoxide + 2 H(+) = H2O2 + O2. Functionally, destroys superoxide anion radicals which are normally produced within the cells and which are toxic to biological systems. In Synechocystis sp. (strain ATCC 27184 / PCC 6803 / Kazusa), this protein is Superoxide dismutase [Fe] (sodB).